The chain runs to 769 residues: Post-GPI attachment to proteins factor 6 (769 aa).

An N-terminal signal peptide occupies residues 1–33 (MGRVGAGGTAREAATGSLLLLLLLLARPPPAAA). At 34–543 (SNSKESEAGL…STAQTVAQQR (510 aa)) the chain is on the extracellular side. Residues Asn-138 and Asn-411 are each glycosylated (N-linked (GlcNAc...) asparagine). Residues 495–531 (PCLNDCGPYGQCLLLRRYGYVYAGCSCKAGWRGWSCT) enclose the EGF-like domain. Intrachain disulfides connect Cys-496–Cys-506, Cys-500–Cys-519, and Cys-521–Cys-530. A helical transmembrane segment spans residues 544–564 (AAALLLTLSNLMFLAPIAISL). Residues 565-567 (HRS) lie on the Cytoplasmic side of the membrane. A helical membrane pass occupies residues 568–588 (FLVEASVYFYTMFFSTFYHAC). Topologically, residues 589 to 603 (DQPGEAVLCILSYDT) are extracellular. The chain crosses the membrane as a helical span at residues 604 to 624 (LQYCDFLGSGASTWVTILCMA). Over 625 to 627 (RLK) the chain is Cytoplasmic. Residues 628 to 648 (TILKQVLLVLGTLVIAMSLQM) form a helical membrane-spanning segment. The Extracellular portion of the chain corresponds to 649 to 651 (DRR). Residues 652–672 (GIWNLMGPCVFAFVIMASMWI) form a helical membrane-spanning segment. Residues 673-688 (YRCGHRGQCYPTSWQR) are Cytoplasmic-facing. The helical transmembrane segment at 689 to 709 (WVFYLLPGISMASVGIAMYTS) threads the bilayer. The Extracellular portion of the chain corresponds to 710-715 (MMTSDN). The chain crosses the membrane as a helical span at residues 716–736 (YYYTHSIWHILLAGSAAFLLP). The Cytoplasmic segment spans residues 737–769 (PREEKAGSWACLQKFPCHYQICRNDRDELYTVT).

Belongs to the TMEM8 family. In terms of processing, glycosylated.

Its subcellular location is the cell membrane. The protein localises to the lysosome membrane. It carries out the reaction a 1,2-diacyl-sn-glycero-3-phosphocholine + H2O = a 1-acyl-sn-glycero-3-phosphocholine + a fatty acid + H(+). Functionally, involved in the lipid remodeling steps of GPI-anchor maturation. Lipid remodeling steps consist in the generation of 2 saturated fatty chains at the sn-2 position of GPI-anchor proteins (GPI-AP). Has phospholipase A2 activity that removes an acyl-chain at the sn-2 position of GPI-anchors during the remodeling of GPI. Required for the shedding of the GPI-AP CRIPTO, but not CFC1, at the cell surface. Shedding of CRIPTO modulates Nodal signaling by allowing soluble CRIPTO to act as a Nodal coreceptor on other cells. Also indirectly involved in the translocation of RAC1 from the cytosol to the plasma membrane by maintaining the steady state amount of CAV1-enriched plasma membrane subdomains, stabilizing RAC1 at the plasma membrane. The polypeptide is Post-GPI attachment to proteins factor 6 (Mus musculus (Mouse)).